Consider the following 156-residue polypeptide: Ribosomal RNA large subunit methyltransferase H (156 aa).

Residues Leu73, Gly104, and 123-128 (LSPLTL) each bind S-adenosyl-L-methionine.

The protein belongs to the RNA methyltransferase RlmH family. Homodimer.

Its subcellular location is the cytoplasm. It carries out the reaction pseudouridine(1915) in 23S rRNA + S-adenosyl-L-methionine = N(3)-methylpseudouridine(1915) in 23S rRNA + S-adenosyl-L-homocysteine + H(+). Functionally, specifically methylates the pseudouridine at position 1915 (m3Psi1915) in 23S rRNA. The sequence is that of Ribosomal RNA large subunit methyltransferase H from Pectobacterium atrosepticum (strain SCRI 1043 / ATCC BAA-672) (Erwinia carotovora subsp. atroseptica).